The following is an 894-amino-acid chain: LRR receptor-like serine/threonine-protein kinase IOS1 (894 aa).

The signal sequence occupies residues 1 to 23 (MAFSSCFLLVLLQIFSALLLCLA). The Extracellular segment spans residues 24 to 515 (QDQSGFISLD…KKKKNTVIAP (492 aa)). 14 N-linked (GlcNAc...) asparagine glycosylation sites follow: N48, N95, N137, N179, N223, N230, N260, N287, N309, N338, N399, N441, N462, and N469. LRR repeat units follow at residues 431–457 (LTSL…NMET) and 459–479 (KLIN…LLDK). A helical transmembrane segment spans residues 516–536 (VAASLVSVFLIGAGIVTFLIL). Residues 537–894 (KRKKRTKLGL…FTTELNPGAR (358 aa)) lie on the Cytoplasmic side of the membrane. T577 is subject to Phosphothreonine. The region spanning 586–858 (NNFERVLGRG…QVVMDLKECL (273 aa)) is the Protein kinase domain. Residues 592-600 (LGRGGFGVV) and K613 each bind ATP. Y658 bears the Phosphotyrosine mark. Residue D710 is the Proton acceptor of the active site. The residue at position 744 (S744) is a Phosphoserine. Phosphothreonine occurs at positions 745 and 750. Y758 carries the phosphotyrosine modification.

Belongs to the protein kinase superfamily. Ser/Thr protein kinase family. In terms of assembly, homodimerization. Interacts with BAK1 and FLS2; triggers FLS2-BAK1 complex formation upon microbe-associated molecular patterns (MAMPs) treatment. Also binds to CERK1 and EFR. As to expression, expressed in roots, cotyledons, leaves, flowers and siliques.

The protein localises to the cell membrane. Functionally, negatively regulates the abscisic acid (ABA) signaling pathway. Required for full susceptibility to filamentous (hemi)biotrophic oomycetes (e.g. H.arabidopsidis and P.parasitica) and fungal (e.g. E.cruciferarum) pathogens, probably by triggering the repression of ABA-sensitive COLD REGULATED and RESISTANCE TO DESICCATION genes during infection, but independently of immune responses. Involved in BAK1-dependent and BAK1-independent microbe-associated molecular patterns (MAMPs)-triggered immunity (PTI) leading to defense responses, including callose deposition and MAPK cascade activation, toward pathogenic bacteria (e.g. P.syringae). Required for chitin-mediated PTI. This is LRR receptor-like serine/threonine-protein kinase IOS1 from Arabidopsis thaliana (Mouse-ear cress).